A 297-amino-acid chain; its full sequence is Phosphoribosylaminoimidazole-succinocarboxamide synthase (297 aa).

Belongs to the SAICAR synthetase family.

The enzyme catalyses 5-amino-1-(5-phospho-D-ribosyl)imidazole-4-carboxylate + L-aspartate + ATP = (2S)-2-[5-amino-1-(5-phospho-beta-D-ribosyl)imidazole-4-carboxamido]succinate + ADP + phosphate + 2 H(+). The protein operates within purine metabolism; IMP biosynthesis via de novo pathway; 5-amino-1-(5-phospho-D-ribosyl)imidazole-4-carboxamide from 5-amino-1-(5-phospho-D-ribosyl)imidazole-4-carboxylate: step 1/2. The sequence is that of Phosphoribosylaminoimidazole-succinocarboxamide synthase from Methylococcus capsulatus (strain ATCC 33009 / NCIMB 11132 / Bath).